The following is a 342-amino-acid chain: RNA 3'-terminal phosphate cyclase (342 aa).

Residues Gln-103 and 283 to 287 (YLADQ) each bind ATP. Residue His-308 is the Tele-AMP-histidine intermediate of the active site.

This sequence belongs to the RNA 3'-terminal cyclase family. Type 1 subfamily.

It is found in the cytoplasm. The catalysed reaction is a 3'-end 3'-phospho-ribonucleotide-RNA + ATP = a 3'-end 2',3'-cyclophospho-ribonucleotide-RNA + AMP + diphosphate. Its function is as follows. Catalyzes the conversion of 3'-phosphate to a 2',3'-cyclic phosphodiester at the end of RNA. The mechanism of action of the enzyme occurs in 3 steps: (A) adenylation of the enzyme by ATP; (B) transfer of adenylate to an RNA-N3'P to produce RNA-N3'PP5'A; (C) and attack of the adjacent 2'-hydroxyl on the 3'-phosphorus in the diester linkage to produce the cyclic end product. The biological role of this enzyme is unknown but it is likely to function in some aspects of cellular RNA processing. This is RNA 3'-terminal phosphate cyclase from Shigella dysenteriae serotype 1 (strain Sd197).